The chain runs to 389 residues: D(-)-tartrate dehydratase (389 aa).

Substrate is bound by residues N21, N55, K102, Y156, K182, 182 to 184 (KMK), 213 to 215 (DAN), E239, E265, H322, and 341 to 343 (ESY). The acceptor role is filled by K184. D213, E239, and E265 together coordinate Mg(2+). H322 (proton donor/acceptor) is an active-site residue.

The protein belongs to the mandelate racemase/muconate lactonizing enzyme family. In terms of assembly, homooctamer; tetramer of dimers. Requires Mg(2+) as cofactor.

The enzyme catalyses (S,S)-tartrate = oxaloacetate + H2O. In terms of biological role, catalyzes the dehydration of D-tartrate to oxaloacetate. This chain is D(-)-tartrate dehydratase (tarD), found in Bradyrhizobium diazoefficiens (strain JCM 10833 / BCRC 13528 / IAM 13628 / NBRC 14792 / USDA 110).